The chain runs to 568 residues: Delta 8-(E)-sphingolipid desaturase (568 aa).

Positions 2–77 constitute a Cytochrome b5 heme-binding domain; that stretch reads DNIISRGEIE…FRKWRIGRID (76 aa). 2 residues coordinate heme: H37 and H60. The next 2 membrane-spanning stretches (helical) occupy residues 241–261 and 272–292; these read FWSAFSMGCAWQQLVFIAHDA and LDNIFGMIIASWVGGLSLGWW. The short motif at 259–263 is the Histidine box-1 element; that stretch reads HDAGH. Positions 296-300 match the Histidine box-2 motif; it reads HNVHH. The next 3 membrane-spanning stretches (helical) occupy residues 352–377, 389–409, and 421–441; these read YLYYPMLAFGRFNLYRLSWMHVLLGL, YFELCGLIFFNYWFFYLLVGC, and IMVSHITTMLVHVQITLSHFA. The Histidine box-3 motif lies at 480-484; sequence QVVHH. Basic and acidic residues predominate over residues 549–560; sequence ATGEREADEKTY. The tract at residues 549 to 568 is disordered; sequence ATGEREADEKTYRTKSIKNA.

It belongs to the fatty acid desaturase type 1 family.

The protein localises to the membrane. It catalyses the reaction an N-acylsphing-4-enine + 2 Fe(II)-[cytochrome b5] + O2 + 2 H(+) = a (4E,8E)-4-sphinga-4,8-dienine ceramide + 2 Fe(III)-[cytochrome b5] + 2 H2O. Its pathway is lipid metabolism; sphingolipid metabolism. Delta(8)-fatty-acid desaturase which introduces a double bond at the 8-position in the long-chain base (LCB) of ceramides. Required for the formation of the di-unsaturated sphingoid base (E,E)-sphinga-4,8-dienine during glucosylceramide (GluCer) biosynthesis. The polypeptide is Delta 8-(E)-sphingolipid desaturase (Lachancea kluyveri (strain ATCC 58438 / CBS 3082 / BCRC 21498 / NBRC 1685 / JCM 7257 / NCYC 543 / NRRL Y-12651) (Yeast)).